We begin with the raw amino-acid sequence, 472 residues long: Probable dipeptidase A (472 aa).

The active site involves cysteine 10.

The protein belongs to the peptidase C69 family.

The enzyme catalyses an L-aminoacyl-L-amino acid + H2O = 2 an L-alpha-amino acid. This chain is Probable dipeptidase A (pepDA), found in Streptococcus pyogenes serotype M18 (strain MGAS8232).